The primary structure comprises 71 residues: Brevinin-1V (71 aa).

The signal sequence occupies residues methionine 1 to cysteine 22. Residues glutamate 23–glutamate 45 constitute a propeptide that is removed on maturation. Cysteine 65 and cysteine 71 form a disulfide bridge.

It belongs to the frog skin active peptide (FSAP) family. Brevinin subfamily. Expressed by the skin glands.

It localises to the secreted. Its function is as follows. Has antimicrobial activity against Gram-positive bacteria and fungi but has weak or no activity against a range of Gram-negative bacteria except P.faecalis. Active against the Gram-positive bacteria E.faecium 091299 (MIC=37.5 uM), S.aureus ATCC 25923 (MIC=2.4 uM), S.carnosus KHS (MIC=19 uM), B.licheniformis X39 (MIC=2.4 uM) and R.rhodochrous X15 (MIC=1.2 uM) and a lower activity against E.faecalis 981 (MIC=75 uM). Active against the Gram-negative bacterium P.faecalis X29 (MIC=9.5 uM) is virtually inactive against E.coli ATCC 25922 (MIC=150 uM), and inactive against P.aeruginosa and S.typhi. Has antifungal activity against C.albicans ATCC 2002 (MIC=9.5 uM) and is also active against the slime mold 090223 (MIC=1.2 uM). Has low hemolytic activity against human erythrocytes (LC(50)=75 uM). The chain is Brevinin-1V from Odorrana hainanensis (Odor frog).